The primary structure comprises 337 residues: Glyceraldehyde-3-phosphate dehydrogenase (337 aa).

NAD(+) is bound by residues 11–12 and Gly110; that span reads TI. Residue 139 to 141 participates in D-glyceraldehyde 3-phosphate binding; it reads SCN. Residue Cys140 is the Nucleophile of the active site. Arg168 provides a ligand contact to NAD(+). Residue 194–195 participates in D-glyceraldehyde 3-phosphate binding; sequence HG. NAD(+) is bound at residue Gln301.

Belongs to the glyceraldehyde-3-phosphate dehydrogenase family. Homotetramer.

It localises to the cytoplasm. The enzyme catalyses D-glyceraldehyde 3-phosphate + phosphate + NADP(+) = (2R)-3-phospho-glyceroyl phosphate + NADPH + H(+). It catalyses the reaction D-glyceraldehyde 3-phosphate + phosphate + NAD(+) = (2R)-3-phospho-glyceroyl phosphate + NADH + H(+). It participates in carbohydrate degradation; glycolysis; pyruvate from D-glyceraldehyde 3-phosphate: step 1/5. This is Glyceraldehyde-3-phosphate dehydrogenase (gap) from Methanothermobacter thermautotrophicus (strain ATCC 29096 / DSM 1053 / JCM 10044 / NBRC 100330 / Delta H) (Methanobacterium thermoautotrophicum).